Here is a 1007-residue protein sequence, read N- to C-terminus: Kinesin-like protein KIN-14F (1007 aa).

The Calponin-homology (CH) domain occupies 41–187 (AARRNEAAGW…CVLALKSYGD (147 aa)). Residues 390–715 (SIRVYCRVRP…LKFAERVSTV (326 aa)) enclose the Kinesin motor domain. 472–479 (GQTGSGKT) serves as a coordination point for ATP. A coiled-coil region spans residues 718–748 (GAARLNKESGEVKELKEQIARLKSSLAMKDS). Over residues 885 to 904 (KQYLRNNSRKKDGNEFEQQR) the composition is skewed to basic and acidic residues. Disordered stretches follow at residues 885–924 (KQYL…ATSD) and 944–1007 (SENG…AGTK). A compositionally biased stretch (polar residues) spans 963-1001 (TRTPLHSQIPSASRKTSNGNRSGRQPLSGSDSRRLSSNG).

This sequence belongs to the TRAFAC class myosin-kinesin ATPase superfamily. Kinesin family. KIN-14 subfamily.

This is Kinesin-like protein KIN-14F from Oryza sativa subsp. japonica (Rice).